A 93-amino-acid polypeptide reads, in one-letter code: Molybdopterin synthase sulfur carrier subunit (93 aa).

Residue Gly93 is modified to 1-thioglycine; alternate. The residue at position 93 (Gly93) is a Glycyl adenylate; alternate.

This sequence belongs to the MoaD family. MOCS2A subfamily. In terms of assembly, heterotetramer; composed of 2 small (MOCS2A) and 2 large (MOCS2B) subunits. C-terminal thiocarboxylation occurs in 2 steps, it is first acyl-adenylated (-COAMP) via the hesA/moeB/thiF part of uba4, then thiocarboxylated (-COSH) via the rhodanese domain of uba4.

Its subcellular location is the cytoplasm. It participates in cofactor biosynthesis; molybdopterin biosynthesis. Functionally, acts as a sulfur carrier required for molybdopterin biosynthesis. Component of the molybdopterin synthase complex that catalyzes the conversion of precursor Z into molybdopterin by mediating the incorporation of 2 sulfur atoms into precursor Z to generate a dithiolene group. In the complex, serves as sulfur donor by being thiocarboxylated (-COSH) at its C-terminus by uba4. After interaction with MOCS2B, the sulfur is then transferred to precursor Z to form molybdopterin. This Pyrenophora tritici-repentis (strain Pt-1C-BFP) (Wheat tan spot fungus) protein is Molybdopterin synthase sulfur carrier subunit.